Here is a 441-residue protein sequence, read N- to C-terminus: Vacuolar cation/proton exchanger 2 (441 aa).

Topologically, residues 1 to 69 are cytoplasmic; it reads MSCCKVPVLI…PKNSVLNSIK (69 aa). Residues 70 to 90 traverse the membrane as a helical segment; sequence IVIFCNKLNLLLPFGPLAILV. Over 91–97 the chain is Extracellular; it reads HYMIDSK. Residues 98–118 form a helical membrane-spanning segment; it reads GWVFLLTLVGITPLAERLGYA. Residues 119-129 are Cytoplasmic-facing; that stretch reads TEQLACYTGPT. The chain crosses the membrane as a helical span at residues 130 to 150; it reads VGGLLNATFGNVTELIISIFA. Residues 139–174 form a cation selection region; the sequence is GNVTELIISIFALKNGMIRVVQLTLLGSILSNMLLV. At 151-166 the chain is on the extracellular side; sequence LKNGMIRVVQLTLLGS. Residues 167-187 form a helical membrane-spanning segment; it reads ILSNMLLVLGCAFFCGGLVFY. Over 188–196 the chain is Cytoplasmic; the sequence is QKDQVFDKG. A helical transmembrane segment spans residues 197–217; it reads IATVNSGLLLMAVMGILFPAV. Over 218-231 the chain is Extracellular; it reads LHYTHSEVHAGSSE. Residues 232–252 traverse the membrane as a helical segment; the sequence is LALSRFSSCIMLIAYAAYLFF. The Cytoplasmic segment spans residues 253–286; it reads QLKSQSNSYSPLDEESNQNEETSAEDEDPEISKW. The helical transmembrane segment at 287-307 threads the bilayer; that stretch reads EAIIWLSILTAWVSLLSGYLV. Residues 308–311 lie on the Extracellular side of the membrane; that stretch reads DAIE. A helical transmembrane segment spans residues 312–332; it reads GASVSWNIPIAFISTILLPIV. Residues 333-354 are Cytoplasmic-facing; that stretch reads GNAAEHAGAIMFAMKDKLDLSL. Positions 333-368 are cation selection; the sequence is GNAAEHAGAIMFAMKDKLDLSLGVAIGSSIQISMFA. A helical membrane pass occupies residues 355-375; it reads GVAIGSSIQISMFAVPFCVVI. Residues 376–384 lie on the Extracellular side of the membrane; it reads GWMMGQQMD. The helical transmembrane segment at 385–405 threads the bilayer; sequence LNFQLFETAMLFITVIVVAFF. Residues 406–412 lie on the Cytoplasmic side of the membrane; that stretch reads LQEGSSN. Residues 413–433 form a helical membrane-spanning segment; that stretch reads YFKGLMLILCYLIVAASFFVH. Residues 434–441 lie on the Extracellular side of the membrane; that stretch reads EDPHQDGI.

Belongs to the Ca(2+):cation antiporter (CaCA) (TC 2.A.19) family. Cation/proton exchanger (CAX) subfamily.

The protein localises to the vacuole membrane. Its activity is regulated as follows. Inhibited by excess of Ca(2+) and Cd(2+), Mn(2+), and Zn(2+). In terms of biological role, vacuolar cation/proton exchanger (CAX). Translocates Ca(2+) and other metal ions into vacuoles using the proton gradient formed by H(+)-ATPase and H(+)-pyrophosphatase. The polypeptide is Vacuolar cation/proton exchanger 2 (CAX2) (Arabidopsis thaliana (Mouse-ear cress)).